The sequence spans 229 residues: Probable calcium-binding protein CML22 (229 aa).

4 EF-hand domains span residues 53–88 (EGLRNIRSVFESYDNDTNGTIDIEELKKCLEELKLS), 89–124 (LSDEEVKGLYSWCDVDGSKGIQFNEFIVLLCLIYLL), 145–180 (SIFDPIVEVFLFLDKDGKGKLNKADVIKTLNNEDYP), and 184–219 (SPSHVTNMRFEEMDWGRKGKVGFREFLFAFMSWVGL). Ca(2+) contacts are provided by D66, D68, N70, T72, and E77.

Potential calcium sensor. The polypeptide is Probable calcium-binding protein CML22 (CML22) (Arabidopsis thaliana (Mouse-ear cress)).